Reading from the N-terminus, the 266-residue chain is Phage-like element PBSX protein XkdC (266 aa).

124–131 serves as a coordination point for ATP; that stretch reads GQPGSGKT.

The protein to B.subtilis YqaM.

Functionally, may function as a transcriptional antiterminator. The polypeptide is Phage-like element PBSX protein XkdC (xkdC) (Bacillus subtilis (strain 168)).